The sequence spans 584 residues: DNA ligase (584 aa).

Residue E249 coordinates ATP. K251 serves as the catalytic N6-AMP-lysine intermediate. ATP contacts are provided by R256, R271, E301, F341, R416, and K422.

It belongs to the ATP-dependent DNA ligase family. The cofactor is Mg(2+).

It catalyses the reaction ATP + (deoxyribonucleotide)n-3'-hydroxyl + 5'-phospho-(deoxyribonucleotide)m = (deoxyribonucleotide)n+m + AMP + diphosphate.. DNA ligase that seals nicks in double-stranded DNA during DNA replication, DNA recombination and DNA repair. The polypeptide is DNA ligase (Pyrobaculum neutrophilum (strain DSM 2338 / JCM 9278 / NBRC 100436 / V24Sta) (Thermoproteus neutrophilus)).